We begin with the raw amino-acid sequence, 316 residues long: Ester hydrolase C11orf54 homolog (316 aa).

Zn(2+) contacts are provided by H267, H269, and H279.

In terms of assembly, monomer. Requires Zn(2+) as cofactor.

It localises to the nucleus. It is found in the cytoplasm. In terms of biological role, exhibits ester hydrolase activity on the substrate p-nitrophenyl acetate, in vitro. May regulate DNA damage and repair by regulating HIF1A degradation via chaperone-mediated autophagy (CMA). The protein is Ester hydrolase C11orf54 homolog of Xenopus laevis (African clawed frog).